We begin with the raw amino-acid sequence, 185 residues long: Ribosome-recycling factor (185 aa).

This sequence belongs to the RRF family.

Its subcellular location is the cytoplasm. Functionally, responsible for the release of ribosomes from messenger RNA at the termination of protein biosynthesis. May increase the efficiency of translation by recycling ribosomes from one round of translation to another. The sequence is that of Ribosome-recycling factor from Thermotoga petrophila (strain ATCC BAA-488 / DSM 13995 / JCM 10881 / RKU-1).